A 161-amino-acid chain; its full sequence is Cyclic pyranopterin monophosphate synthase (161 aa).

Residues 75–77 (MCH) and 115–116 (ME) each bind substrate. Aspartate 130 is an active-site residue.

It belongs to the MoaC family. In terms of assembly, homohexamer; trimer of dimers.

The enzyme catalyses (8S)-3',8-cyclo-7,8-dihydroguanosine 5'-triphosphate = cyclic pyranopterin phosphate + diphosphate. It participates in cofactor biosynthesis; molybdopterin biosynthesis. Its function is as follows. Catalyzes the conversion of (8S)-3',8-cyclo-7,8-dihydroguanosine 5'-triphosphate to cyclic pyranopterin monophosphate (cPMP). The sequence is that of Cyclic pyranopterin monophosphate synthase from Bacillus cereus (strain G9842).